A 375-amino-acid polypeptide reads, in one-letter code: Thiamine-phosphate synthase (375 aa).

The tract at residues 1 to 127 (MTNAESRTVL…AACIESIRYQ (127 aa)) is unknown. The segment at 128 to 375 (CYATFRELEL…SSDVCPLPND (248 aa)) is thiamine-phosphate synthase. 4-amino-2-methyl-5-(diphosphooxymethyl)pyrimidine is bound by residues 183–185 (QLR) and Asn215. Mg(2+)-binding residues include Asp216 and Glu235. The 4-amino-2-methyl-5-(diphosphooxymethyl)pyrimidine site is built by Ser254 and Lys283. Residue Gly315 participates in 2-[(2R,5Z)-2-carboxy-4-methylthiazol-5(2H)-ylidene]ethyl phosphate binding.

Belongs to the thiamine-phosphate synthase family. Mg(2+) is required as a cofactor.

The enzyme catalyses 2-[(2R,5Z)-2-carboxy-4-methylthiazol-5(2H)-ylidene]ethyl phosphate + 4-amino-2-methyl-5-(diphosphooxymethyl)pyrimidine + 2 H(+) = thiamine phosphate + CO2 + diphosphate. It catalyses the reaction 2-(2-carboxy-4-methylthiazol-5-yl)ethyl phosphate + 4-amino-2-methyl-5-(diphosphooxymethyl)pyrimidine + 2 H(+) = thiamine phosphate + CO2 + diphosphate. The catalysed reaction is 4-methyl-5-(2-phosphooxyethyl)-thiazole + 4-amino-2-methyl-5-(diphosphooxymethyl)pyrimidine + H(+) = thiamine phosphate + diphosphate. Its pathway is cofactor biosynthesis; thiamine diphosphate biosynthesis; thiamine phosphate from 4-amino-2-methyl-5-diphosphomethylpyrimidine and 4-methyl-5-(2-phosphoethyl)-thiazole: step 1/1. In terms of biological role, condenses 4-methyl-5-(beta-hydroxyethyl)thiazole monophosphate (THZ-P) and 2-methyl-4-amino-5-hydroxymethyl pyrimidine pyrophosphate (HMP-PP) to form thiamine monophosphate (TMP). This Rhodopirellula baltica (strain DSM 10527 / NCIMB 13988 / SH1) protein is Thiamine-phosphate synthase (thiE).